A 413-amino-acid chain; its full sequence is Multifunctional CCA protein (413 aa).

Residues G8 and R11 each coordinate ATP. The CTP site is built by G8 and R11. The Mg(2+) site is built by E21 and D23. ATP-binding residues include R91, R137, and R140. Positions 91, 137, and 140 each coordinate CTP. One can recognise an HD domain in the interval 228–329; sequence CGIHTLMSLR…WRLLQRLDVL (102 aa).

It belongs to the tRNA nucleotidyltransferase/poly(A) polymerase family. Bacterial CCA-adding enzyme type 1 subfamily. In terms of assembly, monomer. Can also form homodimers and oligomers. Mg(2+) is required as a cofactor. The cofactor is Ni(2+).

The enzyme catalyses a tRNA precursor + 2 CTP + ATP = a tRNA with a 3' CCA end + 3 diphosphate. It carries out the reaction a tRNA with a 3' CCA end + 2 CTP + ATP = a tRNA with a 3' CCACCA end + 3 diphosphate. Its function is as follows. Catalyzes the addition and repair of the essential 3'-terminal CCA sequence in tRNAs without using a nucleic acid template. Adds these three nucleotides in the order of C, C, and A to the tRNA nucleotide-73, using CTP and ATP as substrates and producing inorganic pyrophosphate. tRNA 3'-terminal CCA addition is required both for tRNA processing and repair. Also involved in tRNA surveillance by mediating tandem CCA addition to generate a CCACCA at the 3' terminus of unstable tRNAs. While stable tRNAs receive only 3'-terminal CCA, unstable tRNAs are marked with CCACCA and rapidly degraded. This is Multifunctional CCA protein from Acinetobacter baylyi (strain ATCC 33305 / BD413 / ADP1).